The sequence spans 592 residues: Threonine dehydratase biosynthetic, chloroplastic (592 aa).

The N-terminal 91 residues, 1–91 (MNSVQLPTAQ…NEAENGSIAE (91 aa)), are a transit peptide targeting the chloroplast. Lys141 bears the N6-(pyridoxal phosphate)lysine mark. 2 consecutive ACT-like domains span residues 419–490 (AVLA…NLTT) and 512–583 (VLCR…LVSD).

This sequence belongs to the serine/threonine dehydratase family. Pyridoxal 5'-phosphate serves as cofactor.

It localises to the plastid. Its subcellular location is the chloroplast. The catalysed reaction is L-threonine = 2-oxobutanoate + NH4(+). The protein operates within amino-acid biosynthesis; L-isoleucine biosynthesis; 2-oxobutanoate from L-threonine: step 1/1. Allosterically inhibited by isoleucine. Strain GM11b is isoleucine feedback insensitive and is resistant to the antimetabolite L-O-methylthreonine. In terms of biological role, catalyzes the formation of alpha-ketobutyrate from threonine in a two-step reaction. The first step is a dehydration of threonine, followed by rehydration and liberation of ammonia. This Arabidopsis thaliana (Mouse-ear cress) protein is Threonine dehydratase biosynthetic, chloroplastic (OMR1).